The following is a 388-amino-acid chain: Ribonucleoside-diphosphate reductase subunit beta (388 aa).

The Fe cation site is built by D84, E115, and H118. The active site involves Y122. Fe cation is bound by residues E212, E247, and H250.

The protein belongs to the ribonucleoside diphosphate reductase small chain family. In terms of assembly, heterodimer of a large and a small subunit. Requires Fe cation as cofactor.

The enzyme catalyses a 2'-deoxyribonucleoside 5'-diphosphate + [thioredoxin]-disulfide + H2O = a ribonucleoside 5'-diphosphate + [thioredoxin]-dithiol. Provides the precursors necessary for DNA synthesis. Catalyzes the biosynthesis of deoxyribonucleotides from the corresponding ribonucleotides. This chain is Ribonucleoside-diphosphate reductase subunit beta (NRDB), found in Escherichia coli (Bacteriophage T4).